The primary structure comprises 230 residues: Intracellular hyphae protein 1 (230 aa).

The N-terminal stretch at 1-18 is a signal peptide; that stretch reads MQTSFVALLAVAASLASA. The segment at 20-102 is disordered; the sequence is PHGGNSYEAS…KNNTLPVPTC (83 aa). Tandem repeats lie at residues 30 to 33, 36 to 39, 42 to 45, 46 to 49, 50 to 53, 57 to 60, 65 to 68, 76 to 79, 80 to 83, and 84 to 87. The tract at residues 30-87 is 5 X 4 AA repeats of L-P-E-P; that stretch reads LPEPTNLPEPTKLPEPVEGPYKPKPPILPEPIKDNYKPKTPILPEHVEGPYKPKLPEP. The interval 46–87 is 2 X 4 AA repeats of V-E-G-P; the sequence is VEGPYKPKPPILPEPIKDNYKPKTPILPEHVEGPYKPKLPEP. A 3 X 4 AA repeats of Y-K-P-K region spans residues 50-83; it reads YKPKPPILPEPIKDNYKPKTPILPEHVEGPYKPK. Residues 74–84 show a composition bias toward basic and acidic residues; it reads EHVEGPYKPKL. Asparagine 94 is a glycosylation site (N-linked (GlcNAc...) asparagine). In terms of domain architecture, LysM 1 spans 108–152; the sequence is KTHKVKSGESLTTIAEKYDTGICNIAKLNNLADPNFVDLNQDLQI. Asparagine 161 carries an N-linked (GlcNAc...) asparagine glycan. One can recognise a LysM 2 domain in the interval 183–227; sequence DIYSVVSGDTLTSIAQALQITLQSLKDANPGVVPEHLNVGQKLNV.

As to quaternary structure, forms a multimeric structure. N-glycosylated and may be O-glycosylated. Expressed in penetration hyphae, infection vesicles and primary hyphae (intracellular hyphae).

The protein resides in the secreted. Its subcellular location is the cell wall. Its function is as follows. May have roles in host-pathogen interaction, including establishment and maintenance of biotrophy, prevention of host recognition of the fungus and a barrier to host defense molecules. The polypeptide is Intracellular hyphae protein 1 (CIH1) (Colletotrichum lindemuthianum (Bean anthracnose fungus)).